We begin with the raw amino-acid sequence, 339 residues long: Dihydroorotate dehydrogenase (quinone) (339 aa).

FMN contacts are provided by residues 62-66 (AGLDK) and T86. K66 serves as a coordination point for substrate. 111 to 115 (NRMGF) lines the substrate pocket. N139 and N172 together coordinate FMN. N172 provides a ligand contact to substrate. The active-site Nucleophile is the S175. N177 provides a ligand contact to substrate. Positions 217 and 245 each coordinate FMN. Residue 246–247 (NT) participates in substrate binding. FMN contacts are provided by residues G268, G297, and 318 to 319 (YS).

This sequence belongs to the dihydroorotate dehydrogenase family. Type 2 subfamily. In terms of assembly, monomer. It depends on FMN as a cofactor.

The protein localises to the cell membrane. The catalysed reaction is (S)-dihydroorotate + a quinone = orotate + a quinol. It functions in the pathway pyrimidine metabolism; UMP biosynthesis via de novo pathway; orotate from (S)-dihydroorotate (quinone route): step 1/1. Functionally, catalyzes the conversion of dihydroorotate to orotate with quinone as electron acceptor. The chain is Dihydroorotate dehydrogenase (quinone) from Shewanella amazonensis (strain ATCC BAA-1098 / SB2B).